The sequence spans 314 residues: E3 ubiquitin-protein ligase CHIP (314 aa).

Over residues 1–11 the composition is skewed to basic and acidic residues; it reads MKGKEEREREG. A disordered region spans residues 1–47; that stretch reads MKGKEEREREGGGGAVGPGAAGPGAGGGSPEKSHSAQEHKEQGNRLF. The span at 12 to 29 shows a compositional bias: gly residues; the sequence is GGGAVGPGAAGPGAGGGS. A compositionally biased stretch (basic and acidic residues) spans 31-43; it reads EKSHSAQEHKEQG. TPR repeat units follow at residues 36–69, 70–103, and 105–137; these read AQEHKEQGNRLFGGRKYPEAAAAYGRAINRNPLV, AVYYTNRALCYLKMQQHDKALADCKRALELDGQS, and KAHFFLGQCQMEMENYDEAIANLQRAYNLAKEQ. A U-box domain is found at 237–311; it reads DIPDYLCGKI…DAFISENGWV (75 aa).

Homodimer.

Its subcellular location is the cytoplasm. It localises to the nucleus. The protein localises to the mitochondrion. The enzyme catalyses S-ubiquitinyl-[E2 ubiquitin-conjugating enzyme]-L-cysteine + [acceptor protein]-L-lysine = [E2 ubiquitin-conjugating enzyme]-L-cysteine + N(6)-ubiquitinyl-[acceptor protein]-L-lysine.. Its function is as follows. E3 ubiquitin-protein ligase which targets misfolded chaperone substrates towards proteasomal degradation. Collaborates with ATXN3 in the degradation of misfolded chaperone substrates: ATXN3 restricting the length of ubiquitin chain attached to STUB1/CHIP substrates and preventing further chain extension. The sequence is that of E3 ubiquitin-protein ligase CHIP from Gallus gallus (Chicken).